The primary structure comprises 97 residues: Antitoxin YafN (97 aa).

The protein belongs to the phD/YefM antitoxin family. As to quaternary structure, probably forms a complex with the mRNA interferase YafO which inhibits the mRNA interferase activity.

Antitoxin component of a type II toxin-antitoxin (TA) system. Functions as an mRNA interferase antitoxin; overexpression prevents YafO-mediated cessation of cell growth and inhibition of cell proliferation. The protein is Antitoxin YafN (yafN) of Escherichia coli (strain K12).